Here is a 397-residue protein sequence, read N- to C-terminus: Nuclear egress protein 2 (397 aa).

At 1-358 (MEMNKVLHQD…GPSRPQSGPW (358 aa)) the chain is on the perinuclear space side. 2 disordered regions span residues 205 to 245 (RTAG…PPPP) and 291 to 332 (AAAG…PSLE). Ser-216 bears the Phosphoserine mark. 2 stretches are compositionally biased toward low complexity: residues 224-239 (PSCS…AAAG) and 291-301 (AAAGQDVGGSA). The segment covering 310–322 (SRRRGVSTHHRHP) has biased composition (basic residues). Residues 359–381 (LPARFATLGPLVLALLLVLALLW) traverse the membrane as a helical segment. The Nuclear portion of the chain corresponds to 382–397 (RGHGQSSSPTRSAHRD).

Belongs to the herpesviridae NEC2 protein family. Forms a heterohexameric complex with NEC1. Interacts with host UBA7 and RNF170; this interaction promotes UBA7 proteasomal degradation. In terms of processing, phosphorylated. Phosphorylation by viral kinase UL97 at Ser-216 plays an important role for correct viral nuclear egress complex (NEC) localization.

It localises to the host nucleus inner membrane. Plays an essential role in virion nuclear egress, the first step of virion release from infected cell. Within the host nucleus, NEC1 interacts with the newly formed capsid through the vertexes and directs it to the inner nuclear membrane by associating with NEC2. Induces the budding of the capsid at the inner nuclear membrane as well as its envelopment into the perinuclear space. There, the NEC1/NEC2 complex promotes the fusion of the enveloped capsid with the outer nuclear membrane and the subsequent release of the viral capsid into the cytoplasm where it will reach the secondary budding sites in the host Golgi or trans-Golgi network. Inhibits host ISGylation and subsequent innate antiviral response by targeting host UBA7 for proteasomal degradation. The sequence is that of Nuclear egress protein 2 from Human cytomegalovirus (strain AD169) (HHV-5).